The primary structure comprises 213 residues: Ras-related protein Rab-25 (213 aa).

GTP contacts are provided by serine 21, glycine 24, lysine 25, threonine 26, asparagine 27, serine 38, histidine 39, threonine 43, and threonine 44. Position 26 (threonine 26) interacts with Mg(2+). 2 consecutive short sequence motifs (switch) follow at residues 35–49 (NEFS…GVEF) and 67–84 (DTAG…YYRG). Mg(2+) is bound by residues threonine 44 and aspartate 67. GTP contacts are provided by glycine 70, asparagine 125, lysine 126, aspartate 128, alanine 156, and leucine 157. S-geranylgeranyl cysteine attachment occurs at residues cysteine 209 and cysteine 210. Cysteine methyl ester is present on cysteine 210. A propeptide spans 211 to 213 (ISL) (removed in mature form).

The protein belongs to the small GTPase superfamily. Rab family. In terms of assembly, interacts (GTP-bound form) with RAB11FIP1, RAB11FIP2, RAB11FIP3 and RAB11FIP4. Interacts (via the hypervariable C-terminal region) with ITGB1 (via the cytoplasmic region); the interaction is GTP-dependent. Interacts with ITGAV. Associates with the integrin alpha-V/beta-1 heterodimer. Interacts with VPS33B. Requires Mg(2+) as cofactor.

The protein localises to the cell membrane. Its subcellular location is the cell projection. It is found in the pseudopodium membrane. It localises to the cytoplasmic vesicle. It carries out the reaction GTP + H2O = GDP + phosphate + H(+). Regulated by guanine nucleotide exchange factors (GEFs) which promote the exchange of bound GDP for free GTP. Regulated by GTPase activating proteins (GAPs) which increase the GTP hydrolysis activity. Inhibited by GDP dissociation inhibitors (GDIs) which prevent Rab-GDP dissociation. In terms of biological role, the small GTPases Rab are key regulators of intracellular membrane trafficking, from the formation of transport vesicles to their fusion with membranes. Rabs cycle between an inactive GDP-bound form and an active GTP-bound form that is able to recruit to membranes different set of downstream effectors directly responsible for vesicle formation, movement, tethering and fusion. RAB25 regulates epithelial cell differentiation, proliferation and survival, thereby playing key roles in tumorigenesis. Promotes invasive migration of cells in which it functions to localize and maintain integrin alpha-V/beta-1 at the tips of extending pseudopodia. Involved in the regulation of epithelial morphogenesis through the control of CLDN4 expression and localization at tight junctions. May selectively regulate the apical recycling pathway. Together with MYO5B regulates transcytosis. In Bos taurus (Bovine), this protein is Ras-related protein Rab-25 (RAB25).